A 353-amino-acid polypeptide reads, in one-letter code: Photosystem II D2 protein (353 aa).

The residue at position 2 (threonine 2) is an N-acetylthreonine. Residue threonine 2 is modified to Phosphothreonine. The helical transmembrane segment at 41 to 61 (TAYFALGGWFTGTTFVTSWYT) threads the bilayer. Histidine 118 contributes to the chlorophyll a binding site. The chain crosses the membrane as a helical span at residues 125 to 141 (GFMLRQFELARSVQLRP). Pheophytin a-binding residues include glutamine 130 and asparagine 143. A helical membrane pass occupies residues 153-166 (VFVSVFLIYPLGQS). Histidine 198 is a chlorophyll a binding site. The helical transmembrane segment at 208–228 (AALLCAIHGATVENTLFEDGD) threads the bilayer. Residues histidine 215 and phenylalanine 262 each coordinate a plastoquinone. A Fe cation-binding site is contributed by histidine 215. Histidine 269 contacts Fe cation. A helical membrane pass occupies residues 279–295 (GLWMSAIGVVGLALNLR).

Belongs to the reaction center PufL/M/PsbA/D family. PSII is composed of 1 copy each of membrane proteins PsbA, PsbB, PsbC, PsbD, PsbE, PsbF, PsbH, PsbI, PsbJ, PsbK, PsbL, PsbM, PsbT, PsbX, PsbY, PsbZ, Psb30/Ycf12, at least 3 peripheral proteins of the oxygen-evolving complex and a large number of cofactors. It forms dimeric complexes. Requires The D1/D2 heterodimer binds P680, chlorophylls that are the primary electron donor of PSII, and subsequent electron acceptors. It shares a non-heme iron and each subunit binds pheophytin, quinone, additional chlorophylls, carotenoids and lipids. There is also a Cl(-1) ion associated with D1 and D2, which is required for oxygen evolution. The PSII complex binds additional chlorophylls, carotenoids and specific lipids. as cofactor.

The protein resides in the plastid. The protein localises to the chloroplast thylakoid membrane. The catalysed reaction is 2 a plastoquinone + 4 hnu + 2 H2O = 2 a plastoquinol + O2. Functionally, photosystem II (PSII) is a light-driven water:plastoquinone oxidoreductase that uses light energy to abstract electrons from H(2)O, generating O(2) and a proton gradient subsequently used for ATP formation. It consists of a core antenna complex that captures photons, and an electron transfer chain that converts photonic excitation into a charge separation. The D1/D2 (PsbA/PsbD) reaction center heterodimer binds P680, the primary electron donor of PSII as well as several subsequent electron acceptors. D2 is needed for assembly of a stable PSII complex. The polypeptide is Photosystem II D2 protein (Adiantum capillus-veneris (Maidenhair fern)).